We begin with the raw amino-acid sequence, 233 residues long: Small ribosomal subunit protein uS3 (233 aa).

The 69-residue stretch at 39-107 (IRTFLKRKLY…EVNINIKEER (69 aa)) folds into the KH type-2 domain. Positions 211–233 (GVQPEKTEESAPAKKPRRARRGK) are disordered. The segment covering 213 to 222 (QPEKTEESAP) has biased composition (basic and acidic residues). The segment covering 224–233 (KKPRRARRGK) has biased composition (basic residues).

It belongs to the universal ribosomal protein uS3 family. In terms of assembly, part of the 30S ribosomal subunit. Forms a tight complex with proteins S10 and S14.

In terms of biological role, binds the lower part of the 30S subunit head. Binds mRNA in the 70S ribosome, positioning it for translation. The protein is Small ribosomal subunit protein uS3 of Campylobacter lari (strain RM2100 / D67 / ATCC BAA-1060).